The chain runs to 79 residues: Small ribosomal subunit protein uS17 (79 aa).

The protein belongs to the universal ribosomal protein uS17 family. As to quaternary structure, part of the 30S ribosomal subunit.

Functionally, one of the primary rRNA binding proteins, it binds specifically to the 5'-end of 16S ribosomal RNA. This chain is Small ribosomal subunit protein uS17, found in Mesorhizobium japonicum (strain LMG 29417 / CECT 9101 / MAFF 303099) (Mesorhizobium loti (strain MAFF 303099)).